Consider the following 320-residue polypeptide: tRNA N6-adenosine threonylcarbamoyltransferase (320 aa).

Residues histidine 114 and histidine 118 each coordinate Fe cation. Substrate is bound by residues 136–140 (VVSGG), aspartate 169, glycine 182, aspartate 186, and asparagine 273. Residue aspartate 297 participates in Fe cation binding.

Belongs to the KAE1 / TsaD family. The cofactor is Fe(2+).

It is found in the cytoplasm. The enzyme catalyses L-threonylcarbamoyladenylate + adenosine(37) in tRNA = N(6)-L-threonylcarbamoyladenosine(37) in tRNA + AMP + H(+). Its function is as follows. Required for the formation of a threonylcarbamoyl group on adenosine at position 37 (t(6)A37) in tRNAs that read codons beginning with adenine. Is involved in the transfer of the threonylcarbamoyl moiety of threonylcarbamoyl-AMP (TC-AMP) to the N6 group of A37, together with TsaE and TsaB. TsaD likely plays a direct catalytic role in this reaction. The chain is tRNA N6-adenosine threonylcarbamoyltransferase from Ureaplasma urealyticum serovar 10 (strain ATCC 33699 / Western).